A 101-amino-acid polypeptide reads, in one-letter code: Urease subunit beta (101 aa).

It belongs to the urease beta subunit family. Heterotrimer of UreA (gamma), UreB (beta) and UreC (alpha) subunits. Three heterotrimers associate to form the active enzyme.

It is found in the cytoplasm. The catalysed reaction is urea + 2 H2O + H(+) = hydrogencarbonate + 2 NH4(+). The protein operates within nitrogen metabolism; urea degradation; CO(2) and NH(3) from urea (urease route): step 1/1. This is Urease subunit beta from Sinorhizobium medicae (strain WSM419) (Ensifer medicae).